The primary structure comprises 308 residues: Sulfoquinovosyl glycerol transport system permease protein SmoG (308 aa).

6 helical membrane passes run 28-48 (LAVL…VYPV), 92-112 (VLIT…LALL), 126-146 (SLLI…AWFF), 164-184 (GIIW…TIIW), 223-243 (ITLP…TITA), and 279-299 (LGYG…VTAV). The region spanning 88–300 (TWNTVLITLI…ALSMCVTAVY (213 aa)) is the ABC transmembrane type-1 domain.

It belongs to the binding-protein-dependent transport system permease family. In terms of assembly, the complex is probably composed of two ATP-binding proteins (SmoE), two transmembrane proteins (SmoG and SmoH) and a solute-binding protein (SmoF).

The protein resides in the cell inner membrane. Functionally, part of the ABC transporter complex SmoEFGH involved in sulfoquinovosyl glycerol (SQGro) uptake. Responsible for the translocation of the substrate across the membrane. In Agrobacterium fabrum (strain C58 / ATCC 33970) (Agrobacterium tumefaciens (strain C58)), this protein is Sulfoquinovosyl glycerol transport system permease protein SmoG.